The sequence spans 364 residues: Transcription factor SPEECHLESS (364 aa).

Residues 35-109 (GEISPTAAST…QKMSHVTVER (75 aa)) are disordered. Ser-38 is modified (phosphoserine; by ASK7). Thr-40 bears the Phosphothreonine; by ASK7 mark. The span at 40–53 (TAASTPKDGTTSSK) shows a compositional bias: polar residues. A Phosphoserine; by ASK7 modification is found at Ser-43. Position 44 is a phosphothreonine; by ASK7 (Thr-44). Ser-65 is modified (phosphoserine; by ASK7). The segment covering 79–92 (EDEEEEDGDGEAEE) has biased composition (acidic residues). A basic motif region spans residues 99 to 112 (QQKMSHVTVERNRR). The region spanning 99–150 (QQKMSHVTVERNRRKQMNEHLTVLRSLMPCFYVKRGDQASIIGGVVEYISEL) is the bHLH domain. The interval 113-150 (KQMNEHLTVLRSLMPCFYVKRGDQASIIGGVVEYISEL) is helix-loop-helix motif. Residue Ser-171 is modified to Phosphoserine; by ASK7. Residues 171–227 (SPRVVPSPRPSPPVLSPRKPPLSPRINHHQIHHHLLLPPISPRTPQPTSPYRAIPPQ) are disordered. The span at 175-193 (VPSPRPSPPVLSPRKPPLS) shows a compositional bias: pro residues. Phosphoserine; by ASK7, MPK3 and MPK6 is present on Ser-177. Ser-181 carries the post-translational modification Phosphoserine; by ASK7. Position 186 is a phosphoserine; by CDKA-1, ASK7, MPK3 and MPK6 (Ser-186). Ser-193 is modified (phosphoserine; by MPK3 and MPK6). Basic residues predominate over residues 196-205 (INHHQIHHHL). The segment covering 209–218 (PISPRTPQPT) has biased composition (pro residues). Phosphoserine; by MPK3 and MPK6 is present on Ser-211. A Phosphothreonine; by ASK7, MPK3 and MPK6 modification is found at Thr-214. Phosphoserine; by ASK7, MPK3 and MPK6 is present on Ser-219.

Homodimer. Forms dimers with SCRM and SCRM2. May interact with CDKA-1. In terms of processing, phosphorylated by ASK7/BIN2 and ASK3/SK12; this post-translational modification inhibits activity and limit epidermal cell proliferation. Phosphorylation by MPK3 and MPK6 leads to the inhibition of stomatal fate and to degradation. Stabilized by CDKA-1-mediated phosphorylation at Ser-186 which promotes stomatal development. Expressed in developing leaf epidermis. Reduced accumulation in the stomatal lineage ground cells (SLGCs) where BASL is polarized in the cell cortex. Observed in small cells of non-protruding hypocotyl cell files and of developing cotyledon epidermis. Restricted to meristemoids (stomatal precursor cell) in leaves epidermis, mostly in dividing cells of non-protruding cell files.

Its subcellular location is the nucleus. With respect to regulation, negatively regulated through phosphorylation by the MAPK module. Activity is constrained by polarized BASL in stomatal lineage ground cells (SLGCs) undergoing ACD. Functionally, transcription factor acting as an integration node for stomata and brassinosteroid (BR) signaling pathways to control stomatal initiation and development. Activates transcription when in the presence of SCRM/ICE1. Functions as a dimer with SCRM or SCRM2 during stomatal initiation. Required for the initiation, the spacing and the formation of stomata, by promoting the first asymmetric cell divisions. Together with FMA and MUTE, modulates the stomata formation. Involved in the regulation of growth reduction under osmotic stress (e.g. mannitol), associated with a quick decrease of meristemoid mother cells (MMCs) number lower stomatal index and density. The chain is Transcription factor SPEECHLESS from Arabidopsis thaliana (Mouse-ear cress).